Reading from the N-terminus, the 508-residue chain is Catalase (508 aa).

The signal sequence occupies residues 1-21; the sequence is MHMSKSFLLISMGLASISVHA. Catalysis depends on residues His72 and Asn145. Tyr353 serves as a coordination point for heme. Positions 373 to 392 are enriched in polar residues; sequence PKSPVANHNQDGPSNNSTGL. The segment at 373-396 is disordered; sequence PKSPVANHNQDGPSNNSTGLGNVD.

The protein belongs to the catalase family. The cofactor is heme.

It localises to the periplasm. It carries out the reaction 2 H2O2 = O2 + 2 H2O. Decomposes hydrogen peroxide into water and oxygen; serves to protect cells from the toxic effects of hydrogen peroxide. The sequence is that of Catalase from Vibrio vulnificus (strain YJ016).